Here is a 234-residue protein sequence, read N- to C-terminus: 2-C-methyl-D-erythritol 4-phosphate cytidylyltransferase (234 aa).

Belongs to the IspD/TarI cytidylyltransferase family. IspD subfamily.

It catalyses the reaction 2-C-methyl-D-erythritol 4-phosphate + CTP + H(+) = 4-CDP-2-C-methyl-D-erythritol + diphosphate. It functions in the pathway isoprenoid biosynthesis; isopentenyl diphosphate biosynthesis via DXP pathway; isopentenyl diphosphate from 1-deoxy-D-xylulose 5-phosphate: step 2/6. In terms of biological role, catalyzes the formation of 4-diphosphocytidyl-2-C-methyl-D-erythritol from CTP and 2-C-methyl-D-erythritol 4-phosphate (MEP). This is 2-C-methyl-D-erythritol 4-phosphate cytidylyltransferase from Shewanella sediminis (strain HAW-EB3).